Here is a 335-residue protein sequence, read N- to C-terminus: Holliday junction branch migration complex subunit RuvB (335 aa).

A large ATPase domain (RuvB-L) region spans residues alanine 4–tyrosine 183. Residues arginine 23, glycine 64, lysine 67, threonine 68, threonine 69, glutamate 130–tyrosine 132, arginine 173, tyrosine 183, and arginine 220 each bind ATP. Position 68 (threonine 68) interacts with Mg(2+). A small ATPAse domain (RuvB-S) region spans residues proline 184 to asparagine 254. Residues threonine 257–isoleucine 335 form a head domain (RuvB-H) region. DNA is bound by residues arginine 293, arginine 312, and arginine 317.

The protein belongs to the RuvB family. Homohexamer. Forms an RuvA(8)-RuvB(12)-Holliday junction (HJ) complex. HJ DNA is sandwiched between 2 RuvA tetramers; dsDNA enters through RuvA and exits via RuvB. An RuvB hexamer assembles on each DNA strand where it exits the tetramer. Each RuvB hexamer is contacted by two RuvA subunits (via domain III) on 2 adjacent RuvB subunits; this complex drives branch migration. In the full resolvosome a probable DNA-RuvA(4)-RuvB(12)-RuvC(2) complex forms which resolves the HJ.

Its subcellular location is the cytoplasm. It catalyses the reaction ATP + H2O = ADP + phosphate + H(+). Its function is as follows. The RuvA-RuvB-RuvC complex processes Holliday junction (HJ) DNA during genetic recombination and DNA repair, while the RuvA-RuvB complex plays an important role in the rescue of blocked DNA replication forks via replication fork reversal (RFR). RuvA specifically binds to HJ cruciform DNA, conferring on it an open structure. The RuvB hexamer acts as an ATP-dependent pump, pulling dsDNA into and through the RuvAB complex. RuvB forms 2 homohexamers on either side of HJ DNA bound by 1 or 2 RuvA tetramers; 4 subunits per hexamer contact DNA at a time. Coordinated motions by a converter formed by DNA-disengaged RuvB subunits stimulates ATP hydrolysis and nucleotide exchange. Immobilization of the converter enables RuvB to convert the ATP-contained energy into a lever motion, pulling 2 nucleotides of DNA out of the RuvA tetramer per ATP hydrolyzed, thus driving DNA branch migration. The RuvB motors rotate together with the DNA substrate, which together with the progressing nucleotide cycle form the mechanistic basis for DNA recombination by continuous HJ branch migration. Branch migration allows RuvC to scan DNA until it finds its consensus sequence, where it cleaves and resolves cruciform DNA. In Baumannia cicadellinicola subsp. Homalodisca coagulata, this protein is Holliday junction branch migration complex subunit RuvB.